The following is a 297-amino-acid chain: Pyridoxal 5'-phosphate synthase subunit SNZ1 (297 aa).

Position 23 (aspartate 23) interacts with D-ribose 5-phosphate. Lysine 80 (schiff-base intermediate with D-ribose 5-phosphate) is an active-site residue. Glycine 152 provides a ligand contact to D-ribose 5-phosphate. D-glyceraldehyde 3-phosphate is bound at residue arginine 164. D-ribose 5-phosphate-binding positions include glycine 214 and 235–236; that span reads GS.

This sequence belongs to the PdxS/SNZ family. In terms of assembly, homohexamer. Interacts with AIM18.

It carries out the reaction aldehydo-D-ribose 5-phosphate + D-glyceraldehyde 3-phosphate + L-glutamine = pyridoxal 5'-phosphate + L-glutamate + phosphate + 3 H2O + H(+). It participates in cofactor biosynthesis; pyridoxal 5'-phosphate biosynthesis. Functionally, catalyzes the formation of pyridoxal 5'-phosphate from ribose 5-phosphate (RBP), glyceraldehyde 3-phosphate (G3P) and ammonia. The ammonia is provided by a SNO isoform. Can also use ribulose 5-phosphate and dihydroxyacetone phosphate as substrates, resulting from enzyme-catalyzed isomerization of RBP and G3P, respectively. The chain is Pyridoxal 5'-phosphate synthase subunit SNZ1 (SNZ1) from Saccharomyces cerevisiae (strain ATCC 204508 / S288c) (Baker's yeast).